Here is a 488-residue protein sequence, read N- to C-terminus: Probable glycine dehydrogenase (decarboxylating) subunit 2 (488 aa).

N6-(pyridoxal phosphate)lysine is present on Lys274.

The protein belongs to the GcvP family. C-terminal subunit subfamily. As to quaternary structure, the glycine cleavage system is composed of four proteins: P, T, L and H. In this organism, the P 'protein' is a heterodimer of two subunits. Pyridoxal 5'-phosphate serves as cofactor.

It carries out the reaction N(6)-[(R)-lipoyl]-L-lysyl-[glycine-cleavage complex H protein] + glycine + H(+) = N(6)-[(R)-S(8)-aminomethyldihydrolipoyl]-L-lysyl-[glycine-cleavage complex H protein] + CO2. Functionally, the glycine cleavage system catalyzes the degradation of glycine. The P protein binds the alpha-amino group of glycine through its pyridoxal phosphate cofactor; CO(2) is released and the remaining methylamine moiety is then transferred to the lipoamide cofactor of the H protein. The chain is Probable glycine dehydrogenase (decarboxylating) subunit 2 from Listeria innocua serovar 6a (strain ATCC BAA-680 / CLIP 11262).